A 254-amino-acid chain; its full sequence is UPF0246 protein CPE2152 (254 aa).

It belongs to the UPF0246 family.

The polypeptide is UPF0246 protein CPE2152 (Clostridium perfringens (strain 13 / Type A)).